The sequence spans 162 residues: Phosphopantetheine adenylyltransferase (162 aa).

Threonine 10 contributes to the substrate binding site. Residues 10–11 (TF) and histidine 18 each bind ATP. Lysine 42, leucine 74, and arginine 88 together coordinate substrate. ATP is bound by residues 89-91 (GLR), glutamate 99, and 124-130 (YAFLSSS).

It belongs to the bacterial CoaD family. Homohexamer. Requires Mg(2+) as cofactor.

Its subcellular location is the cytoplasm. The enzyme catalyses (R)-4'-phosphopantetheine + ATP + H(+) = 3'-dephospho-CoA + diphosphate. The protein operates within cofactor biosynthesis; coenzyme A biosynthesis; CoA from (R)-pantothenate: step 4/5. Functionally, reversibly transfers an adenylyl group from ATP to 4'-phosphopantetheine, yielding dephospho-CoA (dPCoA) and pyrophosphate. In Methylococcus capsulatus (strain ATCC 33009 / NCIMB 11132 / Bath), this protein is Phosphopantetheine adenylyltransferase.